A 218-amino-acid chain; its full sequence is Serine/threonine-protein phosphatase 2 (218 aa).

Residues aspartate 22, histidine 24, aspartate 51, and asparagine 77 each contribute to the Mn(2+) site. Histidine 78 (proton donor) is an active-site residue. Histidine 187 contributes to the Mn(2+) binding site.

It belongs to the PPP phosphatase family. Mn(2+) is required as a cofactor.

The catalysed reaction is O-phospho-L-seryl-[protein] + H2O = L-seryl-[protein] + phosphate. It carries out the reaction O-phospho-L-threonyl-[protein] + H2O = L-threonyl-[protein] + phosphate. Its function is as follows. Has been shown, in vitro, to act on Ser, Thr and Tyr-phosphorylated substrates. The sequence is that of Serine/threonine-protein phosphatase 2 (pphB) from Escherichia coli (strain K12).